Consider the following 284-residue polypeptide: 2-dehydro-3-deoxyphosphooctonate aldolase (284 aa).

It belongs to the KdsA family.

The protein resides in the cytoplasm. It carries out the reaction D-arabinose 5-phosphate + phosphoenolpyruvate + H2O = 3-deoxy-alpha-D-manno-2-octulosonate-8-phosphate + phosphate. It functions in the pathway carbohydrate biosynthesis; 3-deoxy-D-manno-octulosonate biosynthesis; 3-deoxy-D-manno-octulosonate from D-ribulose 5-phosphate: step 2/3. It participates in bacterial outer membrane biogenesis; lipopolysaccharide biosynthesis. The sequence is that of 2-dehydro-3-deoxyphosphooctonate aldolase from Shigella boydii serotype 18 (strain CDC 3083-94 / BS512).